A 234-amino-acid polypeptide reads, in one-letter code: Small ribosomal subunit protein uS3 (234 aa).

In terms of domain architecture, KH type-2 spans 39–107 (IRKFLKKELY…EVSINIKEVK (69 aa)).

The protein belongs to the universal ribosomal protein uS3 family. Part of the 30S ribosomal subunit. Forms a tight complex with proteins S10 and S14.

Its function is as follows. Binds the lower part of the 30S subunit head. Binds mRNA in the 70S ribosome, positioning it for translation. The protein is Small ribosomal subunit protein uS3 of Helicobacter pylori (strain P12).